We begin with the raw amino-acid sequence, 62 residues long: Small ribosomal subunit protein uS14 (62 aa).

Positions 25, 28, 41, and 44 each coordinate Zn(2+).

It belongs to the universal ribosomal protein uS14 family. Zinc-binding uS14 subfamily. In terms of assembly, part of the 30S ribosomal subunit. Contacts proteins S3 and S10. Zn(2+) is required as a cofactor.

Its function is as follows. Binds 16S rRNA, required for the assembly of 30S particles and may also be responsible for determining the conformation of the 16S rRNA at the A site. In Aquifex aeolicus (strain VF5), this protein is Small ribosomal subunit protein uS14.